A 217-amino-acid polypeptide reads, in one-letter code: uncharacterized protein (217 aa).

An N-terminal signal peptide occupies residues 1-32 (MPITKATPLFLRYRLKGFVFLTLLLVQGVFTA). Cysteine 33 carries N-palmitoyl cysteine lipidation. Cysteine 33 is lipidated: S-diacylglycerol cysteine.

It belongs to the MG067/MG068/MG395 family.

Its subcellular location is the cell membrane. This is an uncharacterized protein from Mycoplasma pneumoniae (strain ATCC 29342 / M129 / Subtype 1) (Mycoplasmoides pneumoniae).